The sequence spans 254 residues: Aspartate/glutamate leucyltransferase (254 aa).

The protein belongs to the R-transferase family. Bpt subfamily.

It localises to the cytoplasm. The catalysed reaction is N-terminal L-glutamyl-[protein] + L-leucyl-tRNA(Leu) = N-terminal L-leucyl-L-glutamyl-[protein] + tRNA(Leu) + H(+). It catalyses the reaction N-terminal L-aspartyl-[protein] + L-leucyl-tRNA(Leu) = N-terminal L-leucyl-L-aspartyl-[protein] + tRNA(Leu) + H(+). Functions in the N-end rule pathway of protein degradation where it conjugates Leu from its aminoacyl-tRNA to the N-termini of proteins containing an N-terminal aspartate or glutamate. The protein is Aspartate/glutamate leucyltransferase of Maricaulis maris (strain MCS10) (Caulobacter maris).